The primary structure comprises 158 residues: Eukaryotic translation initiation factor 5A-1 (158 aa).

A compositionally biased stretch (basic and acidic residues) spans 1 to 10 (MSDEEHHFES). Positions 1–21 (MSDEEHHFESSDAGASKTYPQ) are disordered. S2 bears the Phosphoserine mark. K51 carries the hypusine modification.

Belongs to the eIF-5A family. Lys-51 undergoes hypusination, a unique post-translational modification that consists in the addition of a butylamino group from spermidine to lysine side chain, leading to the formation of the unusual amino acid hypusine. eIF-5As are the only known proteins to undergo this modification, which is essential for their function. Expressed in leaf vasculature and inflorescence stems. Present in xylem tissue but not in phloem, and in developing vessel members, but not in mature vessels members. Detected in anthers.

Functionally, translation factor that promotes translation elongation and termination, particularly upon ribosome stalling at specific amino acid sequence contexts. Binds between the exit (E) and peptidyl (P) site of the ribosome and promotes rescue of stalled ribosome: specifically required for efficient translation of polyproline-containing peptides as well as other motifs that stall the ribosome. Acts as a ribosome quality control (RQC) cofactor by joining the RQC complex to facilitate peptidyl transfer during CAT tailing step. Involved in xylogenesis. This is Eukaryotic translation initiation factor 5A-1 (ELF5A-1) from Arabidopsis thaliana (Mouse-ear cress).